Consider the following 238-residue polypeptide: Fibroblast growth factor-binding protein 1 (238 aa).

The signal sequence occupies residues 1–20; that stretch reads MRIHGLILLSFLLLAAQVLS. The tract at residues 25–61 is disordered; it reads KTAKNVPDSTTEEDMSPSLGKARNKQRSRTSKSMTHG. Cystine bridges form between cysteine 71–cysteine 88, cysteine 97–cysteine 130, and cysteine 106–cysteine 142. A glycan (O-linked (GalNAc...) serine) is linked at serine 164. Residues 197–238 form a sufficient for interaction with FGF2 and FGF2-induced effects region; sequence KDSECLEDPDVLTQRKTALEFCGESWSSFCTFFLNMLQATSC. 2 disulfides stabilise this stretch: cysteine 201–cysteine 238 and cysteine 218–cysteine 226.

This sequence belongs to the fibroblast growth factor-binding protein family. Found in a complex with FGFBP1, FGF1 and FGF2. Interacts with FGF1, FGF2, FGF7, FGF10, FGF22 and HSPG2. As to expression, expressed in gut, eye, thymus, skin, lung, tongue, Purkinje cells and cerebral chorioid plexus (at protein level).

The protein localises to the secreted. Its subcellular location is the extracellular space. The protein resides in the cell membrane. Functionally, acts as a carrier protein that release fibroblast-binding factors (FGFs) from the extracellular matrix (EM) storage and thus enhance the mitogenic activity of FGFs. Enhances FGF2 signaling during tissue repair, angiogenesis and in tumor growth. In Rattus norvegicus (Rat), this protein is Fibroblast growth factor-binding protein 1 (Fgfbp1).